A 132-amino-acid polypeptide reads, in one-letter code: Fatty acid-binding protein, liver (132 aa).

Val-1 is modified (N-acetylvaline). Residue Tyr-19 is modified to Phosphotyrosine; by Tyr-kinases.

The protein belongs to the calycin superfamily. Fatty-acid binding protein (FABP) family.

Its subcellular location is the cytoplasm. Its function is as follows. FABPs are thought to play a role in the intracellular transport of long-chain fatty acids and their acyl-CoA esters. This is Fatty acid-binding protein, liver from Ginglymostoma cirratum (Nurse shark).